Reading from the N-terminus, the 315-residue chain is Large ribosomal subunit protein uL10 (315 aa).

Over residues 285 to 294 (AAAPAASAAP) the composition is skewed to low complexity. Residues 285–315 (AAAPAASAAPAKEEKEESEESDDDMGFGLFD) are disordered. The segment covering 300–309 (EESEESDDDM) has biased composition (acidic residues).

It belongs to the universal ribosomal protein uL10 family. P0 forms a pentameric complex by interaction with dimers of P1 and P2. Post-translationally, phosphorylated.

Functionally, ribosomal protein P0 is the functional equivalent of E.coli protein L10. In Lithobates sylvaticus (Wood frog), this protein is Large ribosomal subunit protein uL10 (RPLP0).